A 364-amino-acid polypeptide reads, in one-letter code: Protein BRI1-5 ENHANCED 1 (364 aa).

Residues 1-11 show a composition bias toward acidic residues; sequence MVREEQEEDDN. The segment at 1–22 is disordered; it reads MVREEQEEDDNNNNNNGGGERK. NADP(+)-binding positions include 44-49, Arg69, 98-99, Tyr202, Lys206, Val232, and Ser244; these read GGSGFV and DL. Residue Lys206 is the Proton donor of the active site.

It belongs to the NAD(P)-dependent epimerase/dehydratase family. As to quaternary structure, monomer. In terms of tissue distribution, mainly present in cell elongating-containing tissues. Strongly expressed in roots and flowers, also observed in petioles, stems, leaves and siliques.

The protein localises to the cytoplasm. The protein operates within plant hormone biosynthesis; brassinosteroid biosynthesis. In terms of biological role, element of the brassinosteroid metabolic pathway that regulates typhasterol (TY), castasterone (CS) and brassinolide (BL) levels. Involved in the control of organ elongation. The polypeptide is Protein BRI1-5 ENHANCED 1 (Arabidopsis thaliana (Mouse-ear cress)).